Reading from the N-terminus, the 230-residue chain is Cytidylate kinase (230 aa).

Position 12–20 (12–20 (GPSGAGKGT)) interacts with ATP.

The protein belongs to the cytidylate kinase family. Type 1 subfamily.

The protein resides in the cytoplasm. It carries out the reaction CMP + ATP = CDP + ADP. The enzyme catalyses dCMP + ATP = dCDP + ADP. This is Cytidylate kinase from Shewanella baltica (strain OS223).